Consider the following 2335-residue polypeptide: Histone-lysine N-methyltransferase ATXR3 (2335 aa).

4 disordered regions span residues 30 to 142 (NESK…FKDE), 332 to 355 (STGNRLKRHGAEPDSIERKHSYAD), 371 to 556 (CSRS…SSSK), and 902 to 961 (DQVP…KTDT). Polar residues-rich tracts occupy residues 31–46 (ESKTAATTENGHTSIA) and 53–62 (QPANKPSASS). Over residues 65–84 (VKKKRIVKVIRKVVKRRPKQ) the composition is skewed to basic residues. The Nuclear localization signal 1 signature appears at 67–74 (KKRIVKVI). A compositionally biased stretch (polar residues) spans 97-112 (PPSQVVQLPAESQLQI). Basic and acidic residues-rich tracts occupy residues 340-353 (HGAEPDSIERKHSY), 371-390 (CSRSLHSDHYSQHSAERLYR), and 430-452 (WSPHDRSRYHENRDRSPYARERS). The segment covering 461–475 (HARKRSPRDRRHHDY) has biased composition (basic residues). 3 stretches are compositionally biased toward basic and acidic residues: residues 485–498 (SPHDRSRPSDRRDY), 507–548 (QSDR…ESNG), and 910–921 (PRAKVRSKERCP). Positions 527–534 (ERRDCQTG) match the Nuclear localization signal 2 motif. Residues 922 to 932 (SRPARPSPASS) show a composition bias toward low complexity. Residues 941–961 (SHSQSTASTGQDSQGLWKTDT) show a composition bias toward polar residues. The Nuclear localization signal 3 motif lies at 1382–1389 (ARRSSAIL). The tract at residues 1532–1572 (NRKSFSSESDTSSELSDNGKSDNYSSASASESESDIRSEGR) is disordered. Residues 1535-1547 (SFSSESDTSSELS) are compositionally biased toward low complexity. Residues 1765 to 1904 (KEIESRSDDK…YGEEITFDYN (140 aa)) form the SET domain. Cysteine 1868 is a binding site for Zn(2+). An S-adenosyl-L-methionine-binding site is contributed by tyrosine 1903. The 17-residue stretch at 1914 to 1930 (EASVCLCGSQVCRGSYL) folds into the Post-SET domain. Zn(2+)-binding residues include cysteine 1918, cysteine 1920, and cysteine 1925.

Belongs to the class V-like SAM-binding methyltransferase superfamily. Histone-lysine methyltransferase family. TRX/MLL subfamily. Expressed in roots, leaves, stems and inflorescences.

The protein resides in the nucleus. The catalysed reaction is L-lysyl(4)-[histone H3] + 3 S-adenosyl-L-methionine = N(6),N(6),N(6)-trimethyl-L-lysyl(4)-[histone H3] + 3 S-adenosyl-L-homocysteine + 3 H(+). In terms of biological role, histone methyltransferase specifically required for trimethylation of 'Lys-4' of histone H3 (H3K4me3) and is crucial for both sporophyte and gametophyte development. Function as a diurnal 'writer' to counteract the nocturne 'eraser' demethylase activity of JMJ14 thus orchestrating the circadian rhythm of histone modifications (e.g. H3K4me3) and modulating the rhythmic expression of diurnal target genes; this mechanism relies also on the circadian clock oscillators CCA1 and LHY. This is Histone-lysine N-methyltransferase ATXR3 from Arabidopsis thaliana (Mouse-ear cress).